A 232-amino-acid polypeptide reads, in one-letter code: Phosphatidylserine decarboxylase proenzyme (232 aa).

S190 functions as the Schiff-base intermediate with substrate; via pyruvic acid in the catalytic mechanism. Residue S190 is modified to Pyruvic acid (Ser); by autocatalysis.

The protein belongs to the phosphatidylserine decarboxylase family. PSD-A subfamily. In terms of assembly, heterodimer of a large membrane-associated beta subunit and a small pyruvoyl-containing alpha subunit. Pyruvate serves as cofactor. In terms of processing, is synthesized initially as an inactive proenzyme. Formation of the active enzyme involves a self-maturation process in which the active site pyruvoyl group is generated from an internal serine residue via an autocatalytic post-translational modification. Two non-identical subunits are generated from the proenzyme in this reaction, and the pyruvate is formed at the N-terminus of the alpha chain, which is derived from the carboxyl end of the proenzyme. The post-translation cleavage follows an unusual pathway, termed non-hydrolytic serinolysis, in which the side chain hydroxyl group of the serine supplies its oxygen atom to form the C-terminus of the beta chain, while the remainder of the serine residue undergoes an oxidative deamination to produce ammonia and the pyruvoyl prosthetic group on the alpha chain.

Its subcellular location is the cell membrane. The catalysed reaction is a 1,2-diacyl-sn-glycero-3-phospho-L-serine + H(+) = a 1,2-diacyl-sn-glycero-3-phosphoethanolamine + CO2. It functions in the pathway phospholipid metabolism; phosphatidylethanolamine biosynthesis; phosphatidylethanolamine from CDP-diacylglycerol: step 2/2. In terms of biological role, catalyzes the formation of phosphatidylethanolamine (PtdEtn) from phosphatidylserine (PtdSer). In Rhodopseudomonas palustris (strain ATCC BAA-98 / CGA009), this protein is Phosphatidylserine decarboxylase proenzyme.